Consider the following 67-residue polypeptide: Phycobilisome 7.8 kDa linker polypeptide, allophycocyanin-associated, core (67 aa).

The CpcD-like domain maps to 1–56; the sequence is MRMFRITACVPSQTRIRTQRELQNTYFTKLVPYDNSFREQQRIMKMGGKIVKVELA.

It belongs to the phycobilisome linker protein family.

The protein localises to the cellular thylakoid membrane. Its function is as follows. Rod linker protein, associated with allophycocyanin. Linker polypeptides determine the state of aggregation and the location of the disk-shaped phycobiliprotein units within the phycobilisome and modulate their spectroscopic properties in order to mediate a directed and optimal energy transfer. The polypeptide is Phycobilisome 7.8 kDa linker polypeptide, allophycocyanin-associated, core (apcC) (Synechocystis sp. (strain ATCC 27184 / PCC 6803 / Kazusa)).